Consider the following 931-residue polypeptide: Aconitate hydratase A (931 aa).

The disordered stretch occupies residues 402–454 (SASPVDEASAESFPASDAPAYGSQENGAGAPQHADGTGAAVPSNPVTVTAPDG). Residues Cys-472, Cys-538, and Cys-541 each contribute to the [4Fe-4S] cluster site.

This sequence belongs to the aconitase/IPM isomerase family. Requires [4Fe-4S] cluster as cofactor.

It catalyses the reaction citrate = D-threo-isocitrate. The catalysed reaction is citrate = cis-aconitate + H2O. It carries out the reaction cis-aconitate + H2O = D-threo-isocitrate. Its pathway is carbohydrate metabolism; tricarboxylic acid cycle; isocitrate from oxaloacetate: step 2/2. Functionally, catalyzes the reversible isomerization of citrate to isocitrate via cis-aconitate in the tricarboxylic acid (TCA) cycle. Aconitase activity is important for the initiation of morphological and physiological differentiation of S.viridochromogenes. In addition, the apo form of AcnA (lacking the [4Fe-4S] cluster) functions as a RNA-binding regulatory protein, which binds to iron responsive elements (IREs) located on the untranslated region of certain mRNAs, including recA and ftsZ. Binding to IRE-like structures probably alters the target mRNA stability and regulates the protein amount. The apo form plays a regulatory role in oxidative stress response. This Streptomyces viridochromogenes (strain DSM 40736 / JCM 4977 / BCRC 1201 / Tue 494) protein is Aconitate hydratase A.